The sequence spans 128 residues: Mu-like prophage FluMu protein gp35 (128 aa).

Residues Thr-53 to Asn-87 form a disordered region.

It to phage Mu protein gp35. Monomer.

This is Mu-like prophage FluMu protein gp35 from Haemophilus influenzae (strain ATCC 51907 / DSM 11121 / KW20 / Rd).